The sequence spans 261 residues: Kallikrein 1-related peptidase b11 (261 aa).

Residues 1-18 (MWFLILFLALSLGGIDAA) form the signal peptide. A propeptide spans 19 to 24 (PPVQSR) (activation peptide). Residues 25–258 (IVGGFNCEKN…FTNWIKDTMA (234 aa)) form the Peptidase S1 domain. 5 disulfides stabilise this stretch: Cys31-Cys173, Cys50-Cys66, Cys152-Cys219, Cys184-Cys198, and Cys209-Cys234. The active-site Charge relay system is His65. Asn102 carries an N-linked (GlcNAc...) asparagine glycan. Asp120 (charge relay system) is an active-site residue. The active-site Charge relay system is Ser213.

Belongs to the peptidase S1 family. Kallikrein subfamily.

It carries out the reaction Preferential cleavage of Arg-|-Xaa bonds in small molecule substrates. Highly selective action to release kallidin (lysyl-bradykinin) from kininogen involves hydrolysis of Met-|-Xaa or Leu-|-Xaa.. Functionally, glandular kallikreins cleave Met-Lys and Arg-Ser bonds in kininogen to release Lys-bradykinin. In Mus musculus (Mouse), this protein is Kallikrein 1-related peptidase b11 (Klk1b11).